Consider the following 181-residue polypeptide: Protein GrpE (181 aa).

Residues 1-10 (MENTQENPAT) are compositionally biased toward polar residues. Residues 1–33 (MENTQENPATPSAEDIGSEKQAAQGAAPAAEAA) are disordered. Residues 21–33 (QAAQGAAPAAEAA) show a composition bias toward low complexity.

This sequence belongs to the GrpE family. As to quaternary structure, homodimer.

It localises to the cytoplasm. Functionally, participates actively in the response to hyperosmotic and heat shock by preventing the aggregation of stress-denatured proteins, in association with DnaK and GrpE. It is the nucleotide exchange factor for DnaK and may function as a thermosensor. Unfolded proteins bind initially to DnaJ; upon interaction with the DnaJ-bound protein, DnaK hydrolyzes its bound ATP, resulting in the formation of a stable complex. GrpE releases ADP from DnaK; ATP binding to DnaK triggers the release of the substrate protein, thus completing the reaction cycle. Several rounds of ATP-dependent interactions between DnaJ, DnaK and GrpE are required for fully efficient folding. The chain is Protein GrpE from Burkholderia cenocepacia (strain ATCC BAA-245 / DSM 16553 / LMG 16656 / NCTC 13227 / J2315 / CF5610) (Burkholderia cepacia (strain J2315)).